The chain runs to 842 residues: MSRPLTDQEKRKQISVRGLAGVENVTELKKNFNRHLHFTLVKDRNVATPRDYYFALAYTVRDHLVGRWIRTQQHYYEKDPKRIYYLSLEFYIGRTLQNTMVNLALENACDEATYQLGLDMEELEEIEEDAGLGNGGLGRLAACFLDSMATLGLAAYGYGIRYEFGIFNQKISGGWQMEEADDWLRYGNPWEKARPEFTLPVHFYGRVEHTSQGAKWVDTQVVLAMPYDTPVPGYRNNVVNTMRLWSAKAPNDFNLKDFNVGGYIQAVLDRNLAENISRVLYPNDNFFEGKELRLKQEYFVVAATLQDIIRRFKSSKFGCLDPVRTNFDAFPDKVAIQLNDTHPSLAIPELMRILVDQERLEWEKAWEVTVKTCAYTNHTVLPEALERWPVHLIETLLPRHLQIIYEINQRFLNRVAAAFPGDVDRLRRMSLVEEGAVKRINMAHLCIAGSHAVNGVARIHSEILKKTIFKDFYELEPHKFQNKTNGITPRRWLVMCNPGLAEVIAERIGEEYIADLDQLRKLLSYVDDESFIRDVAKVKQENKLKFSAYLEKEYKVHINPNSLFDIQVKRIHEYKRQLLNCLHVITLYNRIKKEPNKFFVPRTVMIGGKAAPGYHMAKMIIRLITAIGDVVNHDPVVGDRLRVIFLENYRVSLAEKVIPAADLSEQISTAGTEASGTGNMKFMLNGALTIGTMDGANVEMAEEAGEENFFIFGMRVEDVERLDQKGYNAQEYYDRIPELRHIIDQLSSGFFSPKQPDLFKDIVNMLMHHDRFKVFADYEEYVKCQERVSALYKNPREWTRMVIRNIATSGKFSSDRTIAQYAREIWGVEPTRQRMPAPDEKI.

N-acetylserine is present on serine 2. Serine 15 carries the post-translational modification Phosphoserine; by PHK; in form phosphorylase A. 2 residues coordinate AMP: aspartate 43 and tyrosine 76. Residues tyrosine 204 and tyrosine 227 each carry the phosphotyrosine modification. AMP is bound at residue 310–319 (RRFKSSKFGC). Position 430 is a phosphoserine (serine 430). Tyrosine 473 is modified (phosphotyrosine). Lysine 681 carries the N6-(pyridoxal phosphate)lysine modification. Residues serine 747 and serine 748 each carry the phosphoserine modification.

It belongs to the glycogen phosphorylase family. As to quaternary structure, homodimer. Homotetramer; to form the enzymatically active phosphorylase A. Pyridoxal 5'-phosphate serves as cofactor. Post-translationally, phosphorylation of Ser-15 converts phosphorylase B (unphosphorylated) to phosphorylase A.

The catalysed reaction is [(1-&gt;4)-alpha-D-glucosyl](n) + phosphate = [(1-&gt;4)-alpha-D-glucosyl](n-1) + alpha-D-glucose 1-phosphate. Allosterically regulated through the non-covalent binding of metabolites, being activated by AMP and inhibited by ATP, ADP, and glucose-6-phosphate. The activity is also controlled by post-translational modifications including phosphorylation. In terms of biological role, allosteric enzyme that catalyzes the rate-limiting step in glycogen catabolism, the phosphorolytic cleavage of glycogen to produce glucose-1-phosphate, and plays a central role in maintaining cellular and organismal glucose homeostasis. The chain is Glycogen phosphorylase, muscle form from Ovis aries (Sheep).